The primary structure comprises 453 residues: Phosphoglucosamine mutase (453 aa).

Ser110 functions as the Phosphoserine intermediate in the catalytic mechanism. Mg(2+) is bound by residues Ser110, Asp248, Asp250, and Asp252. The residue at position 110 (Ser110) is a Phosphoserine.

It belongs to the phosphohexose mutase family. Requires Mg(2+) as cofactor. In terms of processing, activated by phosphorylation.

The enzyme catalyses alpha-D-glucosamine 1-phosphate = D-glucosamine 6-phosphate. Catalyzes the conversion of glucosamine-6-phosphate to glucosamine-1-phosphate. The protein is Phosphoglucosamine mutase of Mycolicibacterium smegmatis (strain ATCC 700084 / mc(2)155) (Mycobacterium smegmatis).